The sequence spans 380 residues: Cytochrome b (380 aa).

The next 4 helical transmembrane spans lie at 34–54, 78–99, 114–134, and 179–199; these read FGSL…LLAM, WLIR…YFHI, WNTG…GYVL, and FFAL…IHLT. Positions 84 and 98 each coordinate heme b. His183 and His197 together coordinate heme b. His202 is an a ubiquinone binding site. A run of 4 helical transmembrane segments spans residues 227–247, 289–309, 321–341, and 348–368; these read LKDI…ALFS, LGGV…PFLH, LSQL…WVGS, and FIII…VLFP.

The protein belongs to the cytochrome b family. The cytochrome bc1 complex contains 11 subunits: 3 respiratory subunits (MT-CYB, CYC1 and UQCRFS1), 2 core proteins (UQCRC1 and UQCRC2) and 6 low-molecular weight proteins (UQCRH/QCR6, UQCRB/QCR7, UQCRQ/QCR8, UQCR10/QCR9, UQCR11/QCR10 and a cleavage product of UQCRFS1). This cytochrome bc1 complex then forms a dimer. Heme b is required as a cofactor.

The protein localises to the mitochondrion inner membrane. Its function is as follows. Component of the ubiquinol-cytochrome c reductase complex (complex III or cytochrome b-c1 complex) that is part of the mitochondrial respiratory chain. The b-c1 complex mediates electron transfer from ubiquinol to cytochrome c. Contributes to the generation of a proton gradient across the mitochondrial membrane that is then used for ATP synthesis. The protein is Cytochrome b (MT-CYB) of Halobaena caerulea (Blue petrel).